Consider the following 147-residue polypeptide: Hemoglobin subunit beta (147 aa).

Position 2 is an N-acetylvaline (Val-2). The Globin domain maps to 3–147 (HLTGEEKSAV…VANALAHKYH (145 aa)). Thr-13 is modified (phosphothreonine). Position 45 is a phosphoserine (Ser-45). Residue Lys-60 is modified to N6-acetyllysine. Heme b is bound at residue His-64. Lys-83 is modified (N6-acetyllysine). His-93 is a binding site for heme b. Cys-94 carries the post-translational modification S-nitrosocysteine. Lys-145 bears the N6-acetyllysine mark.

This sequence belongs to the globin family. Heterotetramer of two alpha chains and two beta chains. Red blood cells.

Its function is as follows. Involved in oxygen transport from the lung to the various peripheral tissues. The chain is Hemoglobin subunit beta (HBB) from Callithrix jacchus (White-tufted-ear marmoset).